We begin with the raw amino-acid sequence, 147 residues long: Siroheme decarboxylase NirG subunit (147 aa).

The protein belongs to the Ahb/Nir family. In terms of assembly, probably forms a complex composed of NirD, NirL, NirG and NirH. All proteins are required for the total conversion of siroheme to didecarboxysiroheme.

It carries out the reaction siroheme + 2 H(+) = 12,18-didecarboxysiroheme + 2 CO2. Its pathway is porphyrin-containing compound metabolism. Its function is as follows. Involved in heme d1 biosynthesis. Catalyzes the decarboxylation of siroheme into didecarboxysiroheme. This Pseudomonas aeruginosa (strain ATCC 15692 / DSM 22644 / CIP 104116 / JCM 14847 / LMG 12228 / 1C / PRS 101 / PAO1) protein is Siroheme decarboxylase NirG subunit.